Reading from the N-terminus, the 956-residue chain is Angiomotin-like protein 1 (956 aa).

The interval 197–246 is disordered; it reads QSQFFRGQQQQQQQQGAVGHGYYMAGGTSQKSRTEGRPTVNRANSGQAHK. Serine 241 and serine 269 each carry phosphoserine. Residues 259-279 adopt a coiled-coil conformation; sequence RSLSERIMQLSLERNGAKQHL. 3 disordered regions span residues 274-322, 382-405, and 411-430; these read GAKQ…QMMS, PSTM…LHSV, and LPMA…SQQL. Residues 282–294 are compositionally biased toward gly residues; sequence SGNGKGFKVGGGP. Serine 295 is subject to Phosphoserine. The span at 382–398 shows a compositional bias: polar residues; it reads PSTMQQHSPMSSQTSSA. Coiled coils occupy residues 438–639 and 665–694; these read VERA…WLER and ALLE…YLEE. A Phosphoserine modification is found at serine 720. The stretch at 729–762 forms a coiled coil; the sequence is SLEAHIWQEEEEVVQANRRCQDMEYTIKNLHAKI. The tract at residues 773–823 is disordered; it reads QQRSRKDAGKTDSSSLRPARSVPSIAAATGTHSRQTSLTSSQLAEEKKEEK. Phosphoserine occurs at positions 793, 805, and 828. A compositionally biased stretch (polar residues) spans 802–815; the sequence is GTHSRQTSLTSSQL. 2 disordered regions span residues 841 to 880 and 894 to 944; these read ASAP…TQTD and PSRG…LHKP. Residues 852 to 866 show a composition bias toward low complexity; the sequence is SALSSIASTTAASSA. Serine 900 carries the phosphoserine modification. The residue at position 902 (threonine 902) is a Phosphothreonine. A Phosphoserine modification is found at serine 906. Residues 953-956 carry the PDZ-binding motif; that stretch reads EVLI.

It belongs to the angiomotin family. Polyubiquitinated by NEDD4, leading to proteasomal degradation.

The protein resides in the cell junction. It localises to the tight junction. Its function is as follows. Inhibits the Wnt/beta-catenin signaling pathway, probably by recruiting CTNNB1 to recycling endosomes and hence preventing its translocation to the nucleus. The protein is Angiomotin-like protein 1 (AMOTL1) of Homo sapiens (Human).